Here is a 95-residue protein sequence, read N- to C-terminus: Stationary phase-expressed protein 1 (95 aa).

Residues 20–38 (FRYIMLGLVGAAVVPTAYM) form a helical membrane-spanning segment.

It is found in the mitochondrion membrane. This is Stationary phase-expressed protein 1 (SPG1) from Saccharomyces cerevisiae (strain RM11-1a) (Baker's yeast).